A 661-amino-acid chain; its full sequence is Kyphoscoliosis peptidase (661 aa).

The tract at residues glycine 116 to tryptophan 137 is disordered. Active-site residues include cysteine 225, histidine 267, and aspartate 282.

Belongs to the transglutaminase-like superfamily. In terms of assembly, interacts with IGFN1 and FLNC. Specifically expressed in skeletal and cardiac muscle.

The protein localises to the cytoplasm. It localises to the cytoskeleton. It is found in the myofibril. The protein resides in the sarcomere. Its subcellular location is the z line. Its function is as follows. Probable cytoskeleton-associated protease required for normal muscle growth. Involved in function, maturation and stabilization of the neuromuscular junction. May act by cleaving muscle-specific proteins such as FLNC. In Mus musculus (Mouse), this protein is Kyphoscoliosis peptidase.